A 702-amino-acid polypeptide reads, in one-letter code: 1,4-alpha-glucan-branching enzyme (702 aa).

Ala-2 carries the post-translational modification N-acetylalanine. Substrate contacts are provided by residues 62–63 (NE) and 91–93 (WAP). Trp-107 provides a ligand contact to (1,4-alpha-D-glucosyl)n. 118 to 121 (EYGK) provides a ligand contact to substrate. Lys-143 lines the (1,4-alpha-D-glucosyl)n pocket. Tyr-173 is modified (phosphotyrosine). 333–336 (EVLR) serves as a coordination point for substrate. The active-site Nucleophile is the Asp-357. Glu-412 functions as the Proton donor in the catalytic mechanism.

It belongs to the glycosyl hydrolase 13 family. GlgB subfamily. Monomer.

It catalyses the reaction Transfers a segment of a (1-&gt;4)-alpha-D-glucan chain to a primary hydroxy group in a similar glucan chain.. It functions in the pathway glycan biosynthesis; glycogen biosynthesis. Its function is as follows. Glycogen-branching enzyme participates in the glycogen biosynthetic process along with glycogenin and glycogen synthase. Generates alpha-1,6-glucosidic branches from alpha-1,4-linked glucose chains, to increase solubility of the glycogen polymer. This chain is 1,4-alpha-glucan-branching enzyme (Gbe1), found in Mus musculus (Mouse).